A 317-amino-acid chain; its full sequence is RHOMBOID-like protein 2 (317 aa).

7 consecutive transmembrane segments (helical) span residues 33-53, 118-138, 149-169, 172-192, 202-222, 224-244, and 272-292; these read SWLI…VMFV, WLHA…FIGI, VGLI…LFLQ, ISVG…SELL, AAAL…GMLP, VDNF…FVLL, and LFVV…VMLF. The Nucleophile role is filled by S177. Residue H229 is the Charge relay system of the active site.

It belongs to the peptidase S54 family. In terms of tissue distribution, expressed in roots, seedlings, leaves, stems and flowers.

It is found in the golgi apparatus membrane. It carries out the reaction Cleaves type-1 transmembrane domains using a catalytic dyad composed of serine and histidine that are contributed by different transmembrane domains.. Its function is as follows. Rhomboid-type serine protease that catalyzes intramembrane proteolysis. Can cleave the Drosophila proteins Spitz and Keren. May function in pollen elongation. The polypeptide is RHOMBOID-like protein 2 (Arabidopsis thaliana (Mouse-ear cress)).